An 888-amino-acid chain; its full sequence is Semaphorin-6B (888 aa).

The signal sequence occupies residues 1–25 (MQTPRASPPRPALLLLLLLLGGAHG). Topologically, residues 26–603 (LFPEEPPPLS…VSVNLLVTSS (578 aa)) are extracellular. In terms of domain architecture, Sema spans 31–523 (PPPLSVAPRD…FPRCVVRVPV (493 aa)). N74 carries N-linked (GlcNAc...) asparagine glycosylation. 2 cysteine pairs are disulfide-bonded: C116/C126 and C144/C153. N155, N167, and N291 each carry an N-linked (GlcNAc...) asparagine glycan. Intrachain disulfides connect C267–C378 and C292–C337. N-linked (GlcNAc...) asparagine glycosylation is found at N386, N441, and N462. Intrachain disulfides connect C486-C517, C526-C544, C532-C578, and C536-C552. The chain crosses the membrane as a helical span at residues 604-624 (VAAFVVGAVVSGFSVGWFVGL). Over 625-888 (RERRELARRK…GADRTAPPVP (264 aa)) the chain is Cytoplasmic. Disordered stretches follow at residues 651 to 679 (VSRL…PPEA), 695 to 742 (LQGG…HPLL), and 757 to 888 (RAPE…PPVP). The segment covering 661–674 (GPGGRGGGGGGGAG) has biased composition (gly residues). The residue at position 665 (R665) is an Omega-N-methylarginine. Residues 706 to 717 (LLPTPEQTPLPQ) show a composition bias toward low complexity.

Belongs to the semaphorin family. In terms of assembly, (Microbial infection) Interacts with P.sordellii toxin TcsL; semaphorins SEMA6A and SEMA6B constitute the major host receptors for TcsL in the vascular endothelium. In terms of tissue distribution, expressed in the brain in GABAergic neurons.

The protein localises to the cell membrane. Functions as a cell surface repellent for mossy fibers of developing neurons in the hippocampus where it plays a role in axon guidance. May function through the PLXNA4 receptor expressed by mossy cell axons. In terms of biological role, (Microbial infection) Acts as a receptor for P.sordellii toxin TcsL in the in the vascular endothelium. The protein is Semaphorin-6B (SEMA6B) of Homo sapiens (Human).